Here is a 498-residue protein sequence, read N- to C-terminus: ATP synthase subunit beta, chloroplastic (498 aa).

172–179 is an ATP binding site; it reads GGAGVGKT.

It belongs to the ATPase alpha/beta chains family. F-type ATPases have 2 components, CF(1) - the catalytic core - and CF(0) - the membrane proton channel. CF(1) has five subunits: alpha(3), beta(3), gamma(1), delta(1), epsilon(1). CF(0) has four main subunits: a(1), b(1), b'(1) and c(9-12).

The protein localises to the plastid. It localises to the chloroplast thylakoid membrane. It carries out the reaction ATP + H2O + 4 H(+)(in) = ADP + phosphate + 5 H(+)(out). Produces ATP from ADP in the presence of a proton gradient across the membrane. The catalytic sites are hosted primarily by the beta subunits. This is ATP synthase subunit beta, chloroplastic from Platanus occidentalis (Sycamore).